A 249-amino-acid polypeptide reads, in one-letter code: Triosephosphate isomerase (249 aa).

Substrate is bound at residue 9-11 (NWK). The active-site Electrophile is His-94. Residue Glu-166 is the Proton acceptor of the active site. Substrate-binding positions include Gly-172 and 232-233 (GG).

The protein belongs to the triosephosphate isomerase family. In terms of assembly, homodimer.

It localises to the cytoplasm. The enzyme catalyses D-glyceraldehyde 3-phosphate = dihydroxyacetone phosphate. It functions in the pathway carbohydrate biosynthesis; gluconeogenesis. Its pathway is carbohydrate degradation; glycolysis; D-glyceraldehyde 3-phosphate from glycerone phosphate: step 1/1. Its function is as follows. Involved in the gluconeogenesis. Catalyzes stereospecifically the conversion of dihydroxyacetone phosphate (DHAP) to D-glyceraldehyde-3-phosphate (G3P). This chain is Triosephosphate isomerase, found in Xylella fastidiosa (strain M23).